Consider the following 455-residue polypeptide: Bifunctional protein GlmU (455 aa).

The tract at residues 1-228 is pyrophosphorylase; it reads MTQPLHVIIL…AQEAEGANDP (228 aa). Residues 10–13, K24, Q76, 81–82, 103–105, G138, E153, N168, and N226 contribute to the UDP-N-acetyl-alpha-D-glucosamine site; these read LAAG, GT, and YGD. Mg(2+) is bound at residue D105. Position 226 (N226) interacts with Mg(2+). The segment at 229–249 is linker; the sequence is WQLSQLERAWQRRAVRALCAQ. The interval 250 to 455 is N-acetyltransferase; the sequence is GARVRDPARL…DGWKRPLKKS (206 aa). Residues R332 and K350 each coordinate UDP-N-acetyl-alpha-D-glucosamine. The active-site Proton acceptor is the H362. 2 residues coordinate UDP-N-acetyl-alpha-D-glucosamine: Y365 and N376. Residues A379, 385 to 386, S404, A422, and R439 each bind acetyl-CoA; that span reads NY.

The protein in the N-terminal section; belongs to the N-acetylglucosamine-1-phosphate uridyltransferase family. This sequence in the C-terminal section; belongs to the transferase hexapeptide repeat family. Homotrimer. Mg(2+) is required as a cofactor.

The protein localises to the cytoplasm. The enzyme catalyses alpha-D-glucosamine 1-phosphate + acetyl-CoA = N-acetyl-alpha-D-glucosamine 1-phosphate + CoA + H(+). The catalysed reaction is N-acetyl-alpha-D-glucosamine 1-phosphate + UTP + H(+) = UDP-N-acetyl-alpha-D-glucosamine + diphosphate. The protein operates within nucleotide-sugar biosynthesis; UDP-N-acetyl-alpha-D-glucosamine biosynthesis; N-acetyl-alpha-D-glucosamine 1-phosphate from alpha-D-glucosamine 6-phosphate (route II): step 2/2. Its pathway is nucleotide-sugar biosynthesis; UDP-N-acetyl-alpha-D-glucosamine biosynthesis; UDP-N-acetyl-alpha-D-glucosamine from N-acetyl-alpha-D-glucosamine 1-phosphate: step 1/1. It functions in the pathway bacterial outer membrane biogenesis; LPS lipid A biosynthesis. Its function is as follows. Catalyzes the last two sequential reactions in the de novo biosynthetic pathway for UDP-N-acetylglucosamine (UDP-GlcNAc). The C-terminal domain catalyzes the transfer of acetyl group from acetyl coenzyme A to glucosamine-1-phosphate (GlcN-1-P) to produce N-acetylglucosamine-1-phosphate (GlcNAc-1-P), which is converted into UDP-GlcNAc by the transfer of uridine 5-monophosphate (from uridine 5-triphosphate), a reaction catalyzed by the N-terminal domain. The polypeptide is Bifunctional protein GlmU (Stenotrophomonas maltophilia (strain R551-3)).